The sequence spans 182 residues: Core-binding factor subunit beta (182 aa).

Ala-173 carries the post-translational modification Phosphoserine.

Belongs to the CBF-beta family. Heterodimer with RUNX1, RUNX2 and RUNX3. Interacts with COPRS. Found in a complex with PRMT5 and RUNX1. As to quaternary structure, (Microbial infection) Interacts with HIV-1 Vif; forming an active cullin-5-RING E3 ubiquitin-protein ligase complex (ECS complex).

Its subcellular location is the nucleus. Forms the heterodimeric complex core-binding factor (CBF) with RUNX family proteins (RUNX1, RUNX2, and RUNX3). RUNX members modulate the transcription of their target genes through recognizing the core consensus binding sequence 5'-TGTGGT-3', or very rarely, 5'-TGCGGT-3', within their regulatory regions via their runt domain, while CBFB is a non-DNA-binding regulatory subunit that allosterically enhances the sequence-specific DNA-binding capacity of RUNX. The heterodimers bind to the core site of a number of enhancers and promoters, including murine leukemia virus, polyomavirus enhancer, T-cell receptor enhancers, LCK, IL3 and GM-CSF promoters. CBF complexes repress ZBTB7B transcription factor during cytotoxic (CD8+) T cell development. They bind to RUNX-binding sequence within the ZBTB7B locus acting as transcriptional silencer and allowing for cytotoxic T cell differentiation. Its function is as follows. (Microbial infection) Following infection, hijacked by the HIV-1 Vif protein, leading to the formation a cullin-5-RING E3 ubiquitin-protein ligase complex (ECS complex) that catalyzes ubiquitination and degradation of APOBEC3F and APOBEC3G. The complex can also ubiquitinate APOBEC3H to some extent. Association with HIV-1 Vif protein also inhibits the transcription coactivator activity of CBFB/CBF-beta. This is Core-binding factor subunit beta (CBFB) from Homo sapiens (Human).